Consider the following 175-residue polypeptide: DELTA-stichotoxin-Hcr4a (175 aa).

The plays an important role in the hemolytic activity stretch occupies residues A1–A10. Residues G9–S28 form an N-terminal region region. Phosphocholine is bound by residues S52, V85, S103, P105, Y131, Y135, and Y136. The segment at S103–K118 is trp-rich region, which is important for the binding to lipid membrane.

Belongs to the actinoporin family. Sea anemone subfamily. Octamer or nonamer in membranes. Monomer in the soluble state.

It is found in the secreted. Its subcellular location is the nematocyst. It localises to the target cell membrane. Functionally, pore-forming protein that forms cations-selective hydrophilic pores of around 1 nm and causes cardiac stimulation and cytolysis. Pore formation is a multi-step process that involves specific recognition of membrane sphingomyelin (but neither cholesterol nor phosphatidylcholine) using aromatic rich region and adjacent phosphocholine (POC) binding site, firm binding to the membrane (mainly driven by hydrophobic interactions) accompanied by the transfer of the N-terminal region to the lipid-water interface and finally pore formation after oligomerization of monomers. The polypeptide is DELTA-stichotoxin-Hcr4a (Radianthus crispa (Leathery sea anemone)).